The chain runs to 484 residues: Malonate-semialdehyde dehydrogenase 1 (484 aa).

Phenylalanine 153, lysine 177, glutamate 180, arginine 181, serine 230, and threonine 252 together coordinate NAD(+). Cysteine 285 functions as the Nucleophile in the catalytic mechanism. Glutamate 385 is a binding site for NAD(+).

The protein belongs to the aldehyde dehydrogenase family. IolA subfamily. As to quaternary structure, homotetramer.

It carries out the reaction 3-oxopropanoate + NAD(+) + CoA + H2O = hydrogencarbonate + acetyl-CoA + NADH + H(+). The catalysed reaction is 2-methyl-3-oxopropanoate + NAD(+) + CoA + H2O = propanoyl-CoA + hydrogencarbonate + NADH + H(+). Its pathway is polyol metabolism; myo-inositol degradation into acetyl-CoA; acetyl-CoA from myo-inositol: step 7/7. Its function is as follows. Catalyzes the oxidation of malonate semialdehyde (MSA) and methylmalonate semialdehyde (MMSA) into acetyl-CoA and propanoyl-CoA, respectively. Is involved in a myo-inositol catabolic pathway. Bicarbonate, and not CO2, is the end-product of the enzymatic reaction. This chain is Malonate-semialdehyde dehydrogenase 1, found in Geobacillus thermodenitrificans (strain NG80-2).